Consider the following 315-residue polypeptide: tRNA-cytidine(32) 2-sulfurtransferase (315 aa).

The PP-loop motif signature appears at 39–44; it reads SGGKDS. [4Fe-4S] cluster is bound by residues cysteine 114, cysteine 117, and cysteine 205.

It belongs to the TtcA family. Homodimer. Mg(2+) is required as a cofactor. The cofactor is [4Fe-4S] cluster.

Its subcellular location is the cytoplasm. The enzyme catalyses cytidine(32) in tRNA + S-sulfanyl-L-cysteinyl-[cysteine desulfurase] + AH2 + ATP = 2-thiocytidine(32) in tRNA + L-cysteinyl-[cysteine desulfurase] + A + AMP + diphosphate + H(+). The protein operates within tRNA modification. Catalyzes the ATP-dependent 2-thiolation of cytidine in position 32 of tRNA, to form 2-thiocytidine (s(2)C32). The sulfur atoms are provided by the cysteine/cysteine desulfurase (IscS) system. This Ralstonia pickettii (strain 12J) protein is tRNA-cytidine(32) 2-sulfurtransferase.